Here is a 1090-residue protein sequence, read N- to C-terminus: Neurofilament heavy polypeptide (1090 aa).

A head region spans residues 2 to 98 (MSFGSADALL…AVAARSEKEQ (97 aa)). A phosphoserine mark is found at Ser-74 and Ser-122. The IF rod domain maps to 95–411 (EKEQLQALND…KLLEGEECRI (317 aa)). The interval 99-130 (LQALNDRFAGYIDKVRQLEAHNRSLEGEAAAL) is coil 1A. Residues 131–143 (RQQQAGRAAMGEL) form a linker 1 region. A coil 1B region spans residues 144 to 242 (YEREVREMRG…QEEVGELLGQ (99 aa)). The linker 12 stretch occupies residues 243–264 (IQGCGAAQAQAQAEARDALKCD). Residues 265 to 286 (VTSALREIRAQLEGHAVQSTLQ) form a coil 2A region. The segment at 287–290 (SEEW) is linker 2. The coil 2B stretch occupies residues 291-411 (FRVRLDRLSE…KLLEGEECRI (121 aa)). A phosphoserine mark is found at Ser-345, Ser-416, and Ser-419. Residues 412-1090 (GFGPSPFSLT…TEDKATKGEK (679 aa)) are tail. Positions 456–1090 (EGQTEEIRVT…TEDKATKGEK (635 aa)) are disordered. Residues 468 to 495 (VTEEEDKEAQGQEGEEAEEGEEKEEEEG) are compositionally biased toward acidic residues. The segment covering 496-506 (AAATSPPAEEA) has biased composition (low complexity). A phosphoserine mark is found at Ser-508, Ser-523, Ser-529, Ser-535, Ser-541, Ser-547, Ser-553, Ser-559, Ser-565, Ser-571, Ser-577, Ser-583, Ser-589, Ser-595, Ser-601, Ser-607, Ser-613, Ser-619, Ser-625, Ser-631, Ser-637, Ser-643, Ser-649, Ser-655, Ser-661, Ser-667, Ser-673, Ser-679, Ser-685, Ser-691, Ser-697, Ser-703, Ser-709, Ser-715, Ser-721, Ser-727, Ser-733, Ser-739, Ser-745, Ser-751, Ser-757, Ser-763, and Ser-769. Positions 508–579 (SPEKETKSRV…KSPAEAKSPA (72 aa)) are enriched in basic and acidic residues. 42 tandem repeats follow at residues 522–527 (KSPGEA), 528–533 (KSPGEA), 534–539 (KSPAEA), 540–545 (KSPGEA), 546–551 (KSPGEA), 552–557 (KSPGEA), 558–563 (KSPAEP), 564–569 (KSPAEP), 570–575 (KSPAEA), 576–581 (KSPAEP), 582–587 (KSPATV), 588–593 (KSPGEA), 594–599 (KSPSEA), 600–605 (KSPAEA), 606–611 (KSPAEA), 612–617 (KSPAEA), 618–623 (KSPAEA), 624–629 (KSPAEA), 630–635 (KSPAEA), 636–641 (KSPATV), 642–647 (KSPGEA), 648–653 (KSPSEA), 654–659 (KSPAEA), 660–665 (KSPAEA), 666–671 (KSPAEA), 672–677 (KSPAEV), 678–683 (KSPGEA), 684–689 (KSPAEP), 690–695 (KSPAEA), 696–701 (KSPAEV), 702–707 (KSPAEA), 708–713 (KSPAEV), 714–719 (KSPGEA), 720–725 (KSPAAV), 726–731 (KSPAEA), 732–737 (KSPAAV), 738–743 (KSPGEA), 744–749 (KSPGEA), 750–755 (KSPAEA), 756–761 (KSPAEA), 762–767 (KSPIEV), and 768–773 (KSPEKA). Residues 522–892 (KSPGEAKSPG…KEEVKSPVKE (371 aa)) are 52 X 6 AA approximate tandem repeats of K-S-P-[AGISV]-[EATK]-[APVQ]. Basic and acidic residues predominate over residues 595–633 (SPSEAKSPAEAKSPAEAKSPAEAKSPAEAKSPAEAKSPA). Over residues 649-717 (SPSEAKSPAE…KSPAEVKSPG (69 aa)) the composition is skewed to basic and acidic residues. Residues 745 to 781 (SPGEAKSPAEAKSPAEAKSPIEVKSPEKAKTPVKEGA) are compositionally biased toward basic and acidic residues. The stretch at 774–779 (KTPVKE) is one 43; approximate repeat. Repeat copies occupy residues 782 to 787 (KSPAEA), 788 to 793 (KSPEKA), 794 to 799 (KSPVKE), 808 to 813 (KSPEKA), 814 to 819 (KSPVKE), and 833 to 838 (KSPEAQ). A phosphoserine mark is found at Ser-783, Ser-789, Ser-795, Ser-809, Ser-815, and Ser-834. A compositionally biased stretch (basic and acidic residues) spans 788–834 (KSPEKAKSPVKEDIKPPAEAKSPEKAKSPVKEGAKPPEKAKPLDVKS). Thr-839 carries the post-translational modification Phosphothreonine. Basic and acidic residues-rich tracts occupy residues 843 to 964 (EEAK…KAVA) and 974 to 1090 (GVKE…KGEK). 3 consecutive repeat copies span residues 858 to 863 (KSPAKE), 866 to 871 (KSPEKE), and 887 to 892 (KSPVKE). A phosphoserine mark is found at Ser-859, Ser-867, Ser-888, and Ser-947.

This sequence belongs to the intermediate filament family. Forms heterodimers with NEFL; which can further hetero-oligomerize (in vitro). Forms heterodimers with INA (in vitro). There are a number of repeats of the tripeptide K-S-P, NFH is phosphorylated on a number of the serines in this motif. It is thought that phosphorylation of NFH results in the formation of interfilament cross bridges that are important in the maintenance of axonal caliber. In terms of processing, phosphorylation seems to play a major role in the functioning of the larger neurofilament polypeptides (NF-M and NF-H), the levels of phosphorylation being altered developmentally and coincidentally with a change in the neurofilament function. Post-translationally, phosphorylated in the head and rod regions by the PKC kinase PKN1, leading to the inhibition of polymerization. Expressed in the sciatic nerve (at protein level).

It localises to the cytoplasm. The protein localises to the cytoskeleton. Its subcellular location is the cell projection. It is found in the axon. Its function is as follows. Neurofilaments usually contain three intermediate filament proteins: NEFL, NEFM, and NEFH which are involved in the maintenance of neuronal caliber. NEFH has an important function in mature axons that is not subserved by the two smaller NF proteins. May additionally cooperate with the neuronal intermediate filament proteins PRPH and INA to form neuronal filamentous networks. This is Neurofilament heavy polypeptide (Nefh) from Mus musculus (Mouse).